We begin with the raw amino-acid sequence, 278 residues long: Envelope glycoprotein L (278 aa).

The signal sequence occupies residues 1–30; sequence MCRRPDCGFSFSPGPVILLWCCLLLPIVSS. The 214-residue stretch at 43–256 folds into the gL betaherpesvirus-type domain; that stretch reads VPAECPELTR…DKYYAGLPPE (214 aa). Cysteines 154 and 159 form a disulfide.

The protein belongs to the herpesviridae glycoprotein L (gL) family. Betaherpesvirinae gL subfamily. Interacts with glycoprotein H (gH); this interaction is necessary for the correct processing and cell surface expression of gH. Forms the envelope pentamer complex (PC) composed of gH, gL, UL128, UL130, and UL131A. The pentamer interacts with host NRP2. Forms the envelope trimer complex composed of gH, gL, and gO. The trimer interacts with host PDGFRA. The trimer also interacts with host EPHA2.

The protein localises to the virion membrane. It localises to the host cell membrane. It is found in the host Golgi apparatus. Its subcellular location is the host trans-Golgi network. Functionally, the heterodimer glycoprotein H-glycoprotein L is required for the fusion of viral and plasma membranes leading to virus entry into the host cell. Acts as a functional inhibitor of gH and maintains gH in an inhibited form. Upon binding to host integrins, gL dissociates from gH leading to activation of the viral fusion glycoproteins gB and gH. In human cytomegalovirus, forms two distincts complexes to mediate viral entry, a trimer and a pentamer at the surface of the virion envelope. The gH-gL-gO trimer is required for infection in fibroblasts by interacting with host PDGFRA, and in glioblastoma cells by interacting with host EPHA2. The gH-gL-UL128-UL130-UL131A pentamer is essential for viral entry in epithelial, endothelial and myeloid cells via interaction with host NRP2. In Human cytomegalovirus (strain 5160) (HHV-5), this protein is Envelope glycoprotein L.